A 157-amino-acid polypeptide reads, in one-letter code: MKVLEGSVAAPNAKVAVVIARFNSFINESLLEGAIDALKRIGQVKDENITIVRTPGAYELPLVARRLAESKKFDAIVALGTVIRGGTAHFEYVAGEASSGLGKVAMDAEIPVAFGVLTTENIEQAIERAGTKAGNKGAEAALTALEMVNLIQQIDAA.

Residues Phe-22, 57-59 (AYE), and 81-83 (TVI) contribute to the 5-amino-6-(D-ribitylamino)uracil site. A (2S)-2-hydroxy-3-oxobutyl phosphate-binding site is contributed by 86–87 (GT). His-89 (proton donor) is an active-site residue. Phe-114 is a binding site for 5-amino-6-(D-ribitylamino)uracil. Residue Arg-128 coordinates (2S)-2-hydroxy-3-oxobutyl phosphate.

It belongs to the DMRL synthase family. In terms of assembly, forms an icosahedral capsid composed of 60 subunits, arranged as a dodecamer of pentamers.

It carries out the reaction (2S)-2-hydroxy-3-oxobutyl phosphate + 5-amino-6-(D-ribitylamino)uracil = 6,7-dimethyl-8-(1-D-ribityl)lumazine + phosphate + 2 H2O + H(+). It functions in the pathway cofactor biosynthesis; riboflavin biosynthesis; riboflavin from 2-hydroxy-3-oxobutyl phosphate and 5-amino-6-(D-ribitylamino)uracil: step 1/2. In terms of biological role, catalyzes the formation of 6,7-dimethyl-8-ribityllumazine by condensation of 5-amino-6-(D-ribitylamino)uracil with 3,4-dihydroxy-2-butanone 4-phosphate. This is the penultimate step in the biosynthesis of riboflavin. The polypeptide is 6,7-dimethyl-8-ribityllumazine synthase (Haemophilus influenzae (strain ATCC 51907 / DSM 11121 / KW20 / Rd)).